A 374-amino-acid chain; its full sequence is UPF0754 membrane protein SAB1779c (374 aa).

Transmembrane regions (helical) follow at residues 4-24 (LFII…TNVI) and 354-374 (SLGF…AIFV).

The protein belongs to the UPF0754 family.

It localises to the cell membrane. This is UPF0754 membrane protein SAB1779c from Staphylococcus aureus (strain bovine RF122 / ET3-1).